The following is a 332-amino-acid chain: Galectin-4 (332 aa).

Galectin domains lie at 19–150 (YHNP…INFI) and 203–332 (FNGR…YVQI). An a beta-D-galactoside-binding site is contributed by 265 to 271 (WGSEERK). At S267 the chain carries Phosphoserine.

In terms of assembly, monomer.

In terms of biological role, galectin that binds lactose and a related range of sugars. May be involved in the assembly of adherens junctions. This Bos taurus (Bovine) protein is Galectin-4 (LGALS4).